The primary structure comprises 127 residues: Peroxiredoxin-2 (127 aa).

In terms of domain architecture, Thioredoxin spans 1 to 125 (LFFYPLDFTF…ALRLVQGXQY (125 aa)). The active-site Cysteine sulfenic acid (-SOH) intermediate is the Cys12. Ser73 carries the post-translational modification Phosphoserine.

This sequence belongs to the peroxiredoxin family. AhpC/Prx1 subfamily. As to quaternary structure, homodimer; disulfide-linked, upon oxidation. 5 homodimers assemble to form a ring-like decamer. Interacts with TIPIN. Post-translationally, the enzyme can be inactivated by further oxidation of the cysteine sulfenic acid (C(P)-SOH) to sulphinic acid (C(P)-SO2H) instead of its condensation to a disulfide bond. It can be reactivated by forming a transient disulfide bond with sulfiredoxin SRXN1, which reduces the cysteine sulfinic acid in an ATP- and Mg-dependent manner. Acetylation increases resistance to transition to high molecular-mass complexes. Deacetylated by HDAC6 which decreases reducing activity.

It localises to the cytoplasm. The enzyme catalyses a hydroperoxide + [thioredoxin]-dithiol = an alcohol + [thioredoxin]-disulfide + H2O. In terms of biological role, thiol-specific peroxidase that catalyzes the reduction of hydrogen peroxide and organic hydroperoxides to water and alcohols, respectively. Plays a role in cell protection against oxidative stress by detoxifying peroxides and as sensor of hydrogen peroxide-mediated signaling events. Might participate in the signaling cascades of growth factors and tumor necrosis factor-alpha by regulating the intracellular concentrations of H(2)O(2). This Sus scrofa (Pig) protein is Peroxiredoxin-2 (PRDX2).